Reading from the N-terminus, the 290-residue chain is Lipoyl synthase (290 aa).

[4Fe-4S] cluster contacts are provided by Cys-44, Cys-49, Cys-55, Cys-70, Cys-74, Cys-77, and Ser-282. Residues 56 to 271 (WGEGTATFMI…ELLGKEMGFR (216 aa)) enclose the Radical SAM core domain.

It belongs to the radical SAM superfamily. Lipoyl synthase family. [4Fe-4S] cluster is required as a cofactor.

It localises to the cytoplasm. The catalysed reaction is [[Fe-S] cluster scaffold protein carrying a second [4Fe-4S](2+) cluster] + N(6)-octanoyl-L-lysyl-[protein] + 2 oxidized [2Fe-2S]-[ferredoxin] + 2 S-adenosyl-L-methionine + 4 H(+) = [[Fe-S] cluster scaffold protein] + N(6)-[(R)-dihydrolipoyl]-L-lysyl-[protein] + 4 Fe(3+) + 2 hydrogen sulfide + 2 5'-deoxyadenosine + 2 L-methionine + 2 reduced [2Fe-2S]-[ferredoxin]. The protein operates within protein modification; protein lipoylation via endogenous pathway; protein N(6)-(lipoyl)lysine from octanoyl-[acyl-carrier-protein]: step 2/2. Its function is as follows. Catalyzes the radical-mediated insertion of two sulfur atoms into the C-6 and C-8 positions of the octanoyl moiety bound to the lipoyl domains of lipoate-dependent enzymes, thereby converting the octanoylated domains into lipoylated derivatives. This chain is Lipoyl synthase, found in Flavobacterium psychrophilum (strain ATCC 49511 / DSM 21280 / CIP 103535 / JIP02/86).